Here is a 411-residue protein sequence, read N- to C-terminus: Serine hydroxymethyltransferase (411 aa).

A (6S)-5,6,7,8-tetrahydrofolate-binding site is contributed by 120–122 (GHL). Lys225 bears the N6-(pyridoxal phosphate)lysine mark. Residues Glu241 and 350–352 (SPF) contribute to the (6S)-5,6,7,8-tetrahydrofolate site.

The protein belongs to the SHMT family. In terms of assembly, homodimer. Requires pyridoxal 5'-phosphate as cofactor.

It localises to the cytoplasm. The enzyme catalyses (6R)-5,10-methylene-5,6,7,8-tetrahydrofolate + glycine + H2O = (6S)-5,6,7,8-tetrahydrofolate + L-serine. It participates in one-carbon metabolism; tetrahydrofolate interconversion. The protein operates within amino-acid biosynthesis; glycine biosynthesis; glycine from L-serine: step 1/1. In terms of biological role, catalyzes the reversible interconversion of serine and glycine with tetrahydrofolate (THF) serving as the one-carbon carrier. This reaction serves as the major source of one-carbon groups required for the biosynthesis of purines, thymidylate, methionine, and other important biomolecules. Also exhibits THF-independent aldolase activity toward beta-hydroxyamino acids, producing glycine and aldehydes, via a retro-aldol mechanism. The chain is Serine hydroxymethyltransferase from Limosilactobacillus fermentum (strain NBRC 3956 / LMG 18251) (Lactobacillus fermentum).